An 868-amino-acid polypeptide reads, in one-letter code: Programmed cell death 6-interacting protein (868 aa).

Residue Ala2 is modified to N-acetylalanine. The BRO1 domain occupies 3 to 392; the sequence is TFISVQLKKT…AQMREATTLA (390 aa). The segment at 176-503 is interaction with CHMP4A, CHMP4B and CHMP4C; it reads TVDISPDTVG…NFRTVLDKAV (328 aa). Residues 176 to 868 form an interaction with EIAV p9 region; the sequence is TVDISPDTVG…PPQQSYYPQQ (693 aa). At Lys215 the chain carries N6-acetyllysine. The interaction with SDCBP stretch occupies residues 418-868; that stretch reads LTKSRSVIEQ…PPQQSYYPQQ (451 aa). Thr479 bears the Phosphothreonine mark. Position 481 is a phosphoserine (Ser481). The self-association stretch occupies residues 503–868; it reads VQADGQVKEC…PPQQSYYPQQ (366 aa). Disordered stretches follow at residues 713–809 and 832–868; these read IARE…YPGY and PYPPVYHQSPGQAPYPGPQQPSYPFPQPPQQSYYPQQ. The interval 717–720 is interaction with TSG101; the sequence is PSAP. Ser730 carries the post-translational modification Phosphoserine. Pro residues predominate over residues 737-763; it reads PTPPTPAPRTMPPTKPQPPARPPPPVL. Phosphothreonine occurs at positions 738 and 741. The residue at position 745 (Arg745) is an Omega-N-methylarginine. Residues 778-791 are compositionally biased toward low complexity; it reads GAGTAAPAPSQTPG. 2 stretches are compositionally biased toward pro residues: residues 792–807 and 844–860; these read SAPPPQAQGPPYPTYP and APYPGPQQPSYPFPQPP. The interval 801 to 806 is interaction with CEP55; that stretch reads PPYPTY. The tract at residues 864–868 is essential to promote virus budding; that stretch reads YYPQQ.

As to quaternary structure, self-associates. Interacts with SH3KBP1/CIN85. Interacts with PDCD6 in a calcium -dependent manner. Interacts with TSG101 in a calcium-dependent manner; PDCD6IP homooligomerization may be required for TSG101-binding. Interacts with SGSM3. Directly interacts with CHMP4A, CHMP4B and CHMP4C. Directly interacts with CEP55 in a 1:2 stoechiometry. The interaction with CEP55 is required for PDCD6IP targeting to the midbody. May interact with PDGFRB. Interacts with SH3GL1 and SH3GL2/endophilin-1. Forms a complex with SDCBP and SDC2. Found in a complex with F-actin, TJP1/ZO-1 and PARD3. Interacts with CD2AP. Interacts with ARRDC1. Interacts (via BRO1 domain) with the ATG12-ATG3 conjugate; this interaction is bridged by ATG12 and promotes multiple PDCD6IP-mediated functions such as endolysosomal trafficking, macroautophagy and exosome biogenesis. (Microbial infection) Interacts with HIV-1 p6. Interacts with HIV-1 p9. In terms of assembly, (Microbial infection) Interacts with EIAV p9. As to quaternary structure, (Microbial infection) Interacts with Murine leukemia virus Gag polyprotein (via LYPX(n)L motif). (Microbial infection) Interacts with ebola virus protein VP40 (via YPx(n)L/I motif). In terms of processing, may be phosphorylated on tyrosine residues by activated PDGFRB.

The protein resides in the cytoplasm. The protein localises to the cytosol. It localises to the melanosome. It is found in the cytoskeleton. Its subcellular location is the microtubule organizing center. The protein resides in the centrosome. The protein localises to the secreted. It localises to the extracellular exosome. It is found in the cell junction. Its subcellular location is the tight junction. The protein resides in the midbody. The protein localises to the midbody ring. In terms of biological role, multifunctional protein involved in endocytosis, multivesicular body biogenesis, membrane repair, cytokinesis, apoptosis and maintenance of tight junction integrity. Class E VPS protein involved in concentration and sorting of cargo proteins of the multivesicular body (MVB) for incorporation into intralumenal vesicles (ILVs) that are generated by invagination and scission from the limiting membrane of the endosome. Binds to the phospholipid lysobisphosphatidic acid (LBPA) which is abundant in MVBs internal membranes. The MVB pathway requires the sequential function of ESCRT-O, -I,-II and -III complexes. The ESCRT machinery also functions in topologically equivalent membrane fission events, such as the terminal stages of cytokinesis. Adapter for a subset of ESCRT-III proteins, such as CHMP4, to function at distinct membranes. Required for completion of cytokinesis. May play a role in the regulation of both apoptosis and cell proliferation. Regulates exosome biogenesis in concert with SDC1/4 and SDCBP. By interacting with F-actin, PARD3 and TJP1 secures the proper assembly and positioning of actomyosin-tight junction complex at the apical sides of adjacent epithelial cells that defines a spatial membrane domain essential for the maintenance of epithelial cell polarity and barrier. (Microbial infection) Involved in HIV-1 virus budding. Can replace TSG101 it its role of supporting HIV-1 release; this function requires the interaction with CHMP4B. The ESCRT machinery also functions in topologically equivalent membrane fission events, such as enveloped virus budding (HIV-1 and other lentiviruses). The sequence is that of Programmed cell death 6-interacting protein from Homo sapiens (Human).